The primary structure comprises 167 residues: Epithelial membrane protein 2 (167 aa).

The chain crosses the membrane as a helical span at residues 1–21; sequence MLVLLAFIIVFHITSAALLLV. Asn44, Asn47, and Asn52 each carry an N-linked (GlcNAc...) asparagine glycan. Transmembrane regions (helical) follow at residues 67–87, 95–115, and 143–163; these read TMILSTILCCIAFLIFLLQLF, FVLTSIIQLMACLCVMIAASI, and FILAWVAFAFTFISGLMYLIL.

The protein belongs to the PMP-22/EMP/MP20 family. Interacts with PTK2; regulates PTK2 activation and localization. Interacts with ITGB3; regulates the levels of the heterodimer ITGA5-ITGB3 integrin surface expression. Interacts with P2RX7 (via C-terminus). Interacts with ITGB1; the interaction may be direct or indirect and ITGB1 has a heterodimer form.

It is found in the golgi apparatus membrane. It localises to the cell membrane. Its subcellular location is the apical cell membrane. The protein resides in the membrane raft. The protein localises to the cytoplasm. It is found in the nucleus. It localises to the perinuclear region. Its function is as follows. Functions as a key regulator of cell membrane composition by regulating protein surface expression. Also, plays a role in regulation of processes including cell migration, cell proliferation, cell contraction and cell adhesion. Regulates transepithelial migration of neutrophils into the alveolar lumen, potentially via mediation of cell surface expression of adhesion markers and lipid raft formation. Negatively regulates caveolae formation by reducing CAV1 expression and CAV1 amount by increasing lysosomal degradation. Facilitates surface trafficking and the formation of lipid rafts bearing GPI-anchor proteins. Regulates surface expression of MHC1 and ICAM1 proteins increasing susceptibility to T-cell mediated cytotoxicity. Regulates the plasma membrane expression of the integrin heterodimers ITGA6-ITGB1, ITGA5-ITGB3 and ITGA5-ITGB1 resulting in modulation of cell-matrix adhesion. Also regulates many processes through PTK2. Regulates blood vessel endothelial cell migration and angiogenesis by regulating VEGF protein expression through PTK2 activation. Regulates cell migration and cell contraction through PTK2 and SRC activation. Regulates focal adhesion density, F-actin conformation and cell adhesion capacity through interaction with PTK2. Positively regulates cell proliferation. Plays a role during cell death and cell blebbing. Promotes angiogenesis and vasculogenesis through induction of VEGFA via a HIF1A-dependent pathway. Also plays a role in embryo implantation by regulating surface trafficking of integrin heterodimer ITGA5-ITGB3. Plays a role in placental angiogenesis and uterine natural killer cell regulation at the maternal-fetal placental interface, however not required in the maternal tissues for a viable pregnancy. Involved in the early stages of embryogenic development and cardiogenesis, potentially via regulation of epithelial-mesenchymal transition timing. May play a role in glomerular filtration. This is Epithelial membrane protein 2 (EMP2) from Bos taurus (Bovine).